A 536-amino-acid chain; its full sequence is Mitogen-activated protein kinase kinase kinase mom-4 (536 aa).

Residues 1 to 20 (MDNSSQSKPSSSSSSHSPSP) are compositionally biased toward low complexity. The interval 1–34 (MDNSSQSKPSSSSSSHSPSPAAITPTQRTTRDSG) is disordered. The Protein kinase domain occupies 51 to 305 (NLNSHYLGKG…SSECVEYFTL (255 aa)). ATP is bound by residues 57–65 (LGKGTYGLV) and Lys-84. Asp-176 functions as the Proton acceptor in the catalytic mechanism. The tract at residues 314–438 (SVPLSDSSTN…EHRRDSNDEE (125 aa)) is disordered. 2 stretches are compositionally biased toward polar residues: residues 315-325 (VPLSDSSTNGP) and 350-366 (NNRT…QQPG). The span at 405–438 (KNFRDRAKSEQRQPHRDARPPPPFEHRRDSNDEE) shows a compositional bias: basic and acidic residues.

Belongs to the protein kinase superfamily. STE Ser/Thr protein kinase family. MAP kinase kinase kinase subfamily. In terms of assembly, interacts with, and is activated by, tap-1. The cofactor is Mg(2+). In terms of processing, may be autophosphorylated.

It carries out the reaction L-seryl-[protein] + ATP = O-phospho-L-seryl-[protein] + ADP + H(+). The enzyme catalyses L-threonyl-[protein] + ATP = O-phospho-L-threonyl-[protein] + ADP + H(+). Functionally, part of the Wnt signaling pathway essential for the specification of the mesodermal cell fate in early embryos. Stimulates the wrm-1/lit-1-dependent phosphorylation of pop-1 and plays a role in the initial nuclear accumulation of wrm-1. The chain is Mitogen-activated protein kinase kinase kinase mom-4 from Caenorhabditis elegans.